The primary structure comprises 879 residues: Alanine--tRNA ligase 1 (879 aa).

4 residues coordinate Zn(2+): His566, His570, Cys668, and His672.

It belongs to the class-II aminoacyl-tRNA synthetase family. Zn(2+) serves as cofactor.

Its subcellular location is the cytoplasm. It catalyses the reaction tRNA(Ala) + L-alanine + ATP = L-alanyl-tRNA(Ala) + AMP + diphosphate. In terms of biological role, catalyzes the attachment of alanine to tRNA(Ala) in a two-step reaction: alanine is first activated by ATP to form Ala-AMP and then transferred to the acceptor end of tRNA(Ala). Also edits incorrectly charged Ser-tRNA(Ala) and Gly-tRNA(Ala) via its editing domain. The chain is Alanine--tRNA ligase 1 from Lachnoclostridium phytofermentans (strain ATCC 700394 / DSM 18823 / ISDg) (Clostridium phytofermentans).